A 117-amino-acid polypeptide reads, in one-letter code: Ribosome-binding factor A (117 aa).

It belongs to the RbfA family. Monomer. Binds 30S ribosomal subunits, but not 50S ribosomal subunits or 70S ribosomes.

It localises to the cytoplasm. Functionally, one of several proteins that assist in the late maturation steps of the functional core of the 30S ribosomal subunit. Associates with free 30S ribosomal subunits (but not with 30S subunits that are part of 70S ribosomes or polysomes). Required for efficient processing of 16S rRNA. May interact with the 5'-terminal helix region of 16S rRNA. The chain is Ribosome-binding factor A from Lactiplantibacillus plantarum (strain ATCC BAA-793 / NCIMB 8826 / WCFS1) (Lactobacillus plantarum).